A 45-amino-acid chain; its full sequence is Large ribosomal subunit protein bL34 (45 aa).

The interval 26–45 is disordered; that stretch reads RAGRSILSARRSKGRSQLSA.

The protein belongs to the bacterial ribosomal protein bL34 family.

This is Large ribosomal subunit protein bL34 from Parafrankia sp. (strain EAN1pec).